Reading from the N-terminus, the 465-residue chain is Azaphilone cluster-specific transcription factor azaR (465 aa).

The span at 1-16 (MSDSRTTTTKNNTTNH) shows a compositional bias: low complexity. Residues 1–25 (MSDSRTTTTKNNTTNHKTSRQGPGS) are disordered. A DNA-binding region (zn(2)-C6 fungal-type) is located at residues 27–53 (CEECRRRKLRCDRQPQCQNCVDAGVYC).

It is found in the nucleus. Functionally, transcription factor that regulates the expression of the gene cluster that mediates the biosynthesis of azaphilones, a class of fungal metabolites characterized by a highly oxygenated pyrano-quinone bicyclic core and exhibiting a broad range of bioactivities. The sequence is that of Azaphilone cluster-specific transcription factor azaR from Aspergillus niger (strain ATCC 1015 / CBS 113.46 / FGSC A1144 / LSHB Ac4 / NCTC 3858a / NRRL 328 / USDA 3528.7).